A 198-amino-acid chain; its full sequence is Ribonuclease HII (198 aa).

The RNase H type-2 domain maps to 6–195; that stretch reads RRVAGVDEVG…VHHMLYQDKN (190 aa). 3 residues coordinate a divalent metal cation: Asp12, Glu13, and Asp103.

Belongs to the RNase HII family. It depends on Mn(2+) as a cofactor. Requires Mg(2+) as cofactor.

The protein resides in the cytoplasm. The enzyme catalyses Endonucleolytic cleavage to 5'-phosphomonoester.. Functionally, endonuclease that specifically degrades the RNA of RNA-DNA hybrids. The polypeptide is Ribonuclease HII (Roseobacter denitrificans (strain ATCC 33942 / OCh 114) (Erythrobacter sp. (strain OCh 114))).